Here is a 356-residue protein sequence, read N- to C-terminus: Phosphoserine aminotransferase (356 aa).

R41 lines the L-glutamate pocket. Pyridoxal 5'-phosphate is bound by residues 76-77 (AS), W102, T150, D169, and Q192. At K193 the chain carries N6-(pyridoxal phosphate)lysine. Position 234-235 (234-235 (NT)) interacts with pyridoxal 5'-phosphate.

The protein belongs to the class-V pyridoxal-phosphate-dependent aminotransferase family. SerC subfamily. As to quaternary structure, homodimer. Pyridoxal 5'-phosphate serves as cofactor.

The protein localises to the cytoplasm. It carries out the reaction O-phospho-L-serine + 2-oxoglutarate = 3-phosphooxypyruvate + L-glutamate. The enzyme catalyses 4-(phosphooxy)-L-threonine + 2-oxoglutarate = (R)-3-hydroxy-2-oxo-4-phosphooxybutanoate + L-glutamate. Its pathway is amino-acid biosynthesis; L-serine biosynthesis; L-serine from 3-phospho-D-glycerate: step 2/3. It participates in cofactor biosynthesis; pyridoxine 5'-phosphate biosynthesis; pyridoxine 5'-phosphate from D-erythrose 4-phosphate: step 3/5. In terms of biological role, catalyzes the reversible conversion of 3-phosphohydroxypyruvate to phosphoserine and of 3-hydroxy-2-oxo-4-phosphonooxybutanoate to phosphohydroxythreonine. The polypeptide is Phosphoserine aminotransferase (Flavobacterium psychrophilum (strain ATCC 49511 / DSM 21280 / CIP 103535 / JIP02/86)).